The primary structure comprises 120 residues: UPF0231 protein CKO_03249 (120 aa).

It belongs to the UPF0231 family.

The protein is UPF0231 protein CKO_03249 of Citrobacter koseri (strain ATCC BAA-895 / CDC 4225-83 / SGSC4696).